A 226-amino-acid polypeptide reads, in one-letter code: DnaJ homolog subfamily C member 30, mitochondrial (226 aa).

The transit peptide at 1-38 (MAAMRWRWWQRLLPWRLLQARGFPQNSAPSLGLGARTY) directs the protein to the mitochondrion. Positions 49 to 114 (ALYDLLGVPS…TLRRKYDRGL (66 aa)) constitute a J domain. Residues 116–157 (SDEDLRGPGVRPSRTPAPDPGSPRTPPPTSRTHDGSRASPGA) are disordered. Positions 130–144 (TPAPDPGSPRTPPPT) are enriched in pro residues. The chain crosses the membrane as a helical span at residues 208-225 (DTAAIFLIFSIFIIIGFY).

Associates with the ATP synthase complex. Interacts with MT-ATP6; interaction is direct. Interacts with ATP5MC2; interaction is direct. In terms of tissue distribution, expressed in brain, heart, kidney, liver, lung, spleen, stomach and testis. Highly expressed in the brain. In the neocortex, expressed in most, if not all, glutamatergic excitatory projection neurons (pyramidal) and many interneurons, with the strongest signal noticeably in large pyramidal neurons of layer 3C. Also present in pyramidal neurons of layer 3C PNs of the superior temporal cortex, as well as in pyramidal neurons (Betz cells) of the layer 5B primary motor cortex (at protein level).

The protein localises to the mitochondrion inner membrane. Its function is as follows. Mitochondrial protein enriched in neurons that acts as a regulator of mitochondrial respiration. Associates with the ATP synthase complex and facilitates ATP synthesis. May be a chaperone protein involved in the turnover of the subunits of mitochondrial complex I N-module. It facilitates the degradation of N-module subunits damaged by oxidative stress, and contributes to complex I functional efficiency. The polypeptide is DnaJ homolog subfamily C member 30, mitochondrial (Homo sapiens (Human)).